The sequence spans 270 residues: Putative carboxymethylenebutenolidase (270 aa).

Catalysis depends on residues cysteine 147, aspartate 204, and histidine 236.

This sequence belongs to the dienelactone hydrolase family.

The enzyme catalyses 2-(5-oxo-2,5-dihydrofuran-2-ylidene)acetate + H2O = 4-oxohex-2-enedioate + H(+). The polypeptide is Putative carboxymethylenebutenolidase (ysgA) (Salmonella typhi).